We begin with the raw amino-acid sequence, 271 residues long: NH(3)-dependent NAD(+) synthetase (271 aa).

Position 43-50 (43-50 (GISGGQDS)) interacts with ATP. Residue aspartate 49 participates in Mg(2+) binding. Arginine 136 contacts deamido-NAD(+). An ATP-binding site is contributed by threonine 156. Glutamate 161 is a Mg(2+) binding site. Residues lysine 169 and aspartate 176 each contribute to the deamido-NAD(+) site. Residues lysine 185 and threonine 207 each coordinate ATP. Position 256-257 (256-257 (HK)) interacts with deamido-NAD(+).

This sequence belongs to the NAD synthetase family. Homodimer.

It carries out the reaction deamido-NAD(+) + NH4(+) + ATP = AMP + diphosphate + NAD(+) + H(+). The protein operates within cofactor biosynthesis; NAD(+) biosynthesis; NAD(+) from deamido-NAD(+) (ammonia route): step 1/1. Its function is as follows. Catalyzes the ATP-dependent amidation of deamido-NAD to form NAD. Uses ammonia as a nitrogen source. This is NH(3)-dependent NAD(+) synthetase from Tropheryma whipplei (strain TW08/27) (Whipple's bacillus).